A 127-amino-acid polypeptide reads, in one-letter code: Fluoride-specific ion channel FluC (127 aa).

Transmembrane regions (helical) follow at residues 4–24 (LSVL…RYLI), 38–58 (YGTL…IAAF), 71–91 (IIGL…MDNV), and 104–124 (LNVL…FQLL). Gly-78 and Thr-81 together coordinate Na(+).

This sequence belongs to the fluoride channel Fluc/FEX (TC 1.A.43) family.

The protein resides in the cell inner membrane. The catalysed reaction is fluoride(in) = fluoride(out). With respect to regulation, na(+) is not transported, but it plays an essential structural role and its presence is essential for fluoride channel function. Fluoride-specific ion channel. Important for reducing fluoride concentration in the cell, thus reducing its toxicity. This is Fluoride-specific ion channel FluC from Vibrio campbellii (strain ATCC BAA-1116).